A 429-amino-acid chain; its full sequence is MHTKSIELHNEALQHIVGGVNSPSRSYKAVGGGSPVAMEKASGAYFWDVDGNKYIDYLAAYGPIITGHAHPHITEAIKKAAENGVLYGTPTKHEVTFAKMLKEAIPAMDKVRFVNSGTEAVMTTIRVARAYTGRTKIIKFAGCYHGHSDLVLVAAGSGPSTLGTPDSAGVPKSIANEVITVPFNDIDSYKAALEKWGSEIAAVLVEPIVGNFGIVEPKEGFLEQVNELTHNAGALVIYDEVITAFRFMYGGAQDLLQVKPDLTALGKIIGGGLPIGAYGGKQEIMEQVAPLGPAYQAGTMAGNPASILSGIACLEVLKEKGVYEKLDHLGAMLEEGILKHAETHGITITVNRLKGALTVYFSDEKVENYEQAERSDGETFSTFFKLMLERGINLAPSKYEAWFITTAHTEQDIKDTLTAVEDAFKHLKN.

N6-(pyridoxal phosphate)lysine is present on Lys-267.

It belongs to the class-III pyridoxal-phosphate-dependent aminotransferase family. HemL subfamily. As to quaternary structure, homodimer. The cofactor is pyridoxal 5'-phosphate.

The protein localises to the cytoplasm. The catalysed reaction is (S)-4-amino-5-oxopentanoate = 5-aminolevulinate. It participates in porphyrin-containing compound metabolism; protoporphyrin-IX biosynthesis; 5-aminolevulinate from L-glutamyl-tRNA(Glu): step 2/2. This chain is Glutamate-1-semialdehyde 2,1-aminomutase 2 (gsaB), found in Bacillus subtilis (strain 168).